Consider the following 670-residue polypeptide: Zinc finger protein 526 (670 aa).

3 C2H2-type zinc fingers span residues 57 to 79, 108 to 130, and 140 to 163; these read FMCSECGSLYNTLEEVLSHQEQH, FQCGECSQLILSPGELLAHQDAH, and YQCWDCQELFPSPELWVAHRKAQH. 2 disordered regions span residues 168-196 and 217-304; these read VAEPPVPPPLPPPTPLPPPSPPSEVKMEP and GTHF…ATHP. The segment covering 171–189 has biased composition (pro residues); it reads PPVPPPLPPPTPLPPPSPP. A C2H2-type 4 zinc finger spans residues 197–219; it reads YECPECSTLCATPEEFLEHQGTH. Residues 217 to 231 are compositionally biased toward basic and acidic residues; the sequence is GTHFDSLEKEERNGL. Residues 232-263 are compositionally biased toward acidic residues; sequence EEEEEDDEEDEEDDEEMEDEEAMAEVGDDAVG. 9 consecutive C2H2-type zinc fingers follow at residues 305–327, 332–354, 360–382, 388–409, 442–465, 472–494, 500–522, 528–550, and 573–595; these read FHCSQCQRSFSSANRLQAHGRAH, HECTTCSKVFKKAASLEQHLRLH, YLCVDCGRGFGTELTLVAHRRAH, HRCRCGKTFSNMTKFLYHRRTH, LPCPQCSKSFASASRLSRHRRAVH, HRCGVCGKGFKKLIHVRNHLRTH, FQCHSCGKTFASLANLSRHQLTH, YQCLDCGKRFTQSSNLQQHRRLH, and YYCGTCGRWFRAMAGLRLHQRVH. The disordered stretch occupies residues 409–443; the sequence is HAGKSGAPPTGATAPPAPAEPTPPPPPPAPPAQLP. Residues 423–442 show a composition bias toward pro residues; sequence PPAPAEPTPPPPPPAPPAQL. The tract at residues 601–621 is disordered; it reads LTLQPPRSPSPAPPPPPEPQQ. Residues 606–619 are compositionally biased toward pro residues; the sequence is PRSPSPAPPPPPEP.

Belongs to the krueppel C2H2-type zinc-finger protein family. Widely expressed.

The protein localises to the nucleus. In terms of biological role, may be involved in transcriptional regulation. This Homo sapiens (Human) protein is Zinc finger protein 526 (ZNF526).